A 64-amino-acid chain; its full sequence is MLTKPYLLVSSKYMYTIPPDQTSVILEPYKASTSVNSLGVTSLQPYSEKKTGIDKFLNSAVLSA.

This is an uncharacterized protein from Saccharomyces cerevisiae (strain ATCC 204508 / S288c) (Baker's yeast).